We begin with the raw amino-acid sequence, 613 residues long: Ribosome-associated molecular chaperone SSB1 (613 aa).

Positions 1–391 are nucleotide binding domain (NBD); it reads MAEGVFSGAI…ILTGSNLSDD (391 aa). ATP-binding positions include 16–18, lysine 73, 205–207, 271–278, and glycine 342; these read TTY, GGT, and ERAKRTLS. The segment at 392–402 is inter-domain linker; that stretch reads TKDLLLLDVAP. Positions 403–613 are substrate binding domain (SBD); that stretch reads LSLGVAMQGD…RVVTKAMATR (211 aa). The interval 516-612 is lid domain (SBDalpha); sequence SEDIEKMVSQ…KRVVTKAMAT (97 aa). The short motif at 574-582 is the Nuclear export signal element; sequence VEAALADAF.

This sequence belongs to the heat shock protein 70 family. Ssb-type Hsp70 subfamily. Binds to ribosomes. Binds close to the ribosomal tunnel exit via contacts with both ribosomal proteins and rRNA. Directly interacts with nascent polypeptides. This interaction is dependent on the ribosome-associated complex (RAC). Interacts with SSE1. Interacts with FES1.

Its subcellular location is the cytoplasm. The catalysed reaction is ATP + H2O = ADP + phosphate + H(+). Functionally, ribosome-bound, Hsp70-type chaperone that assists in the cotranslational folding of newly synthesized proteins in the cytosol. Stimulates folding by interacting with nascent chains, binding to short, largely hydrophobic sequences exposed by unfolded proteins, thereby stabilizing longer, more slowly translated, and aggregation-prone nascent polypeptides and domains that cannot fold stably until fully synthesized. The Hsp70-protein substrate interaction depends on ATP-binding and on allosteric regulation between the NBD and the SBD. The ATP-bound state is characterized by a fast exchange rate of substrate (low affinity state), while in the ADP-bound state exchange is much slower (high affinity state). During the Hsp70 cycle, the chaperone switches between the ATP-bound state (open conformation) and the ADP-bound state (closed conformation) by major conformational rearrangements involving mainly the lid domain. Ssb cooperates with a specific Hsp40/Hsp70 co-chaperone termed the ribosome-associated complex (RAC), which stimulates the ATPase activity of the ribosome-associated pool of Ssbs and switches it to the high affinity substrate binding state. Hsp110 chaperone SSE1 and FES1 act as nucleotide exchange factors that cause substrate release. The protein is Ribosome-associated molecular chaperone SSB1 (SSB1) of Eremothecium gossypii (strain ATCC 10895 / CBS 109.51 / FGSC 9923 / NRRL Y-1056) (Yeast).